Here is a 152-residue protein sequence, read N- to C-terminus: Peptide deformylase (152 aa).

Positions 88 and 130 each coordinate Fe cation. Residue Glu131 is part of the active site. Residue His134 participates in Fe cation binding.

The protein belongs to the polypeptide deformylase family. Fe(2+) is required as a cofactor.

The catalysed reaction is N-terminal N-formyl-L-methionyl-[peptide] + H2O = N-terminal L-methionyl-[peptide] + formate. Removes the formyl group from the N-terminal Met of newly synthesized proteins. Requires at least a dipeptide for an efficient rate of reaction. N-terminal L-methionine is a prerequisite for activity but the enzyme has broad specificity at other positions. This chain is Peptide deformylase, found in Carboxydothermus hydrogenoformans (strain ATCC BAA-161 / DSM 6008 / Z-2901).